The following is a 258-amino-acid chain: Acyl-[acyl-carrier-protein]--UDP-N-acetylglucosamine O-acyltransferase (258 aa).

The protein belongs to the transferase hexapeptide repeat family. LpxA subfamily. As to quaternary structure, homotrimer.

It is found in the cytoplasm. It carries out the reaction a (3R)-hydroxyacyl-[ACP] + UDP-N-acetyl-alpha-D-glucosamine = a UDP-3-O-[(3R)-3-hydroxyacyl]-N-acetyl-alpha-D-glucosamine + holo-[ACP]. Its pathway is glycolipid biosynthesis; lipid IV(A) biosynthesis; lipid IV(A) from (3R)-3-hydroxytetradecanoyl-[acyl-carrier-protein] and UDP-N-acetyl-alpha-D-glucosamine: step 1/6. Involved in the biosynthesis of lipid A, a phosphorylated glycolipid that anchors the lipopolysaccharide to the outer membrane of the cell. The protein is Acyl-[acyl-carrier-protein]--UDP-N-acetylglucosamine O-acyltransferase of Pseudomonas fluorescens (strain SBW25).